The primary structure comprises 647 residues: Putative ferric-chelate reductase 1 homolog (647 aa).

A helical membrane pass occupies residues 10–30 (WLATLVTALLAVAIWPDPGQS). In terms of domain architecture, Reelin spans 25–195 (PDPGQSLPQG…AAPPLPTQSP (171 aa)). N-linked (GlcNAc...) asparagine glycosylation is found at Asn127 and Asn158. Residues 245 to 368 (TKSCTSITVV…GKYHLLVASG (124 aa)) enclose the DOMON domain. The 199-residue stretch at 372–570 (KENSVGYHDI…HLIFSIGGMA (199 aa)) folds into the Cytochrome b561 domain. The chain crosses the membrane as a helical span at residues 408–428 (LHGAFMIAAWIGTTSLGIIFA). 2 residues coordinate heme b: His409 and His450. 5 consecutive transmembrane segments (helical) span residues 452–472 (LLMV…WVEL), 480–500 (HSII…GALF), 515–535 (GHWL…FFSV), 548–568 (WILV…SIGG), and 616–636 (LLGV…LLVV). Positions 480 and 516 each coordinate heme b.

The protein belongs to the FRRS1 family. Heme b is required as a cofactor.

Its subcellular location is the membrane. Putative ferric-chelate reductases reduce Fe(3+) to Fe(2+) before its transport from the endosome to the cytoplasm. The sequence is that of Putative ferric-chelate reductase 1 homolog from Drosophila melanogaster (Fruit fly).